A 251-amino-acid chain; its full sequence is Cell division protein ZapD (251 aa).

Belongs to the ZapD family. As to quaternary structure, interacts with FtsZ.

It is found in the cytoplasm. Functionally, cell division factor that enhances FtsZ-ring assembly. Directly interacts with FtsZ and promotes bundling of FtsZ protofilaments, with a reduction in FtsZ GTPase activity. The sequence is that of Cell division protein ZapD from Burkholderia ambifaria (strain MC40-6).